A 214-amino-acid polypeptide reads, in one-letter code: ATP phosphoribosyltransferase (214 aa).

It belongs to the ATP phosphoribosyltransferase family. Short subfamily. As to quaternary structure, heteromultimer composed of HisG and HisZ subunits.

It localises to the cytoplasm. It catalyses the reaction 1-(5-phospho-beta-D-ribosyl)-ATP + diphosphate = 5-phospho-alpha-D-ribose 1-diphosphate + ATP. It functions in the pathway amino-acid biosynthesis; L-histidine biosynthesis; L-histidine from 5-phospho-alpha-D-ribose 1-diphosphate: step 1/9. Functionally, catalyzes the condensation of ATP and 5-phosphoribose 1-diphosphate to form N'-(5'-phosphoribosyl)-ATP (PR-ATP). Has a crucial role in the pathway because the rate of histidine biosynthesis seems to be controlled primarily by regulation of HisG enzymatic activity. This chain is ATP phosphoribosyltransferase, found in Azoarcus sp. (strain BH72).